Reading from the N-terminus, the 236-residue chain is Uridylate kinase (236 aa).

8–11 (KLSG) is a binding site for ATP. Gly51 lines the UMP pocket. The ATP site is built by Gly52 and Arg56. Residues Asp71 and 133–140 (TGRPFFTT) contribute to the UMP site. 3 residues coordinate ATP: Asn161, Phe167, and Asp170.

It belongs to the UMP kinase family. Homohexamer.

It localises to the cytoplasm. The catalysed reaction is UMP + ATP = UDP + ADP. The protein operates within pyrimidine metabolism; CTP biosynthesis via de novo pathway; UDP from UMP (UMPK route): step 1/1. With respect to regulation, inhibited by UTP. Catalyzes the reversible phosphorylation of UMP to UDP. This chain is Uridylate kinase, found in Mesomycoplasma hyopneumoniae (strain 232) (Mycoplasma hyopneumoniae).